Reading from the N-terminus, the 224-residue chain is Peptidyl-prolyl cis-trans isomerase FKBP3 (224 aa).

Position 2 is an N-acetylalanine (Ala-2). A Phosphoserine modification is found at Ser-36. The interval 88-118 (VKLSDDKPKDSKSEETLDEGPPKYTKSILKK) is disordered. Residues 89-102 (KLSDDKPKDSKSEE) show a composition bias toward basic and acidic residues. Position 99 is an N6-acetyllysine (Lys-99). Residues 128–224 (GDVVHCWYTG…IFEVELVDID (97 aa)) form the PPIase FKBP-type domain. Residue Ser-152 is modified to Phosphoserine. Lys-170 is subject to N6-acetyllysine.

It belongs to the FKBP-type PPIase family.

It is found in the nucleus. The catalysed reaction is [protein]-peptidylproline (omega=180) = [protein]-peptidylproline (omega=0). Inhibited preferentially by rapamycin over FK506. Functionally, FK506- and rapamycin-binding proteins (FKBPs) constitute a family of receptors for the two immunosuppressants which inhibit T-cell proliferation by arresting two distinct cytoplasmic signal transmission pathways. PPIases accelerate the folding of proteins. The polypeptide is Peptidyl-prolyl cis-trans isomerase FKBP3 (Fkbp3) (Mus musculus (Mouse)).